A 429-amino-acid polypeptide reads, in one-letter code: UDP-N-acetylglucosamine 1-carboxyvinyltransferase (429 aa).

22–23 is a binding site for phosphoenolpyruvate; that stretch reads KN. Arginine 93 provides a ligand contact to UDP-N-acetyl-alpha-D-glucosamine. Catalysis depends on cysteine 117, which acts as the Proton donor. Cysteine 117 bears the 2-(S-cysteinyl)pyruvic acid O-phosphothioketal mark. UDP-N-acetyl-alpha-D-glucosamine-binding positions include 122–126, aspartate 313, and isoleucine 335; that span reads RPVDQ.

Belongs to the EPSP synthase family. MurA subfamily.

The protein resides in the cytoplasm. It catalyses the reaction phosphoenolpyruvate + UDP-N-acetyl-alpha-D-glucosamine = UDP-N-acetyl-3-O-(1-carboxyvinyl)-alpha-D-glucosamine + phosphate. It participates in cell wall biogenesis; peptidoglycan biosynthesis. Its function is as follows. Cell wall formation. Adds enolpyruvyl to UDP-N-acetylglucosamine. The sequence is that of UDP-N-acetylglucosamine 1-carboxyvinyltransferase from Variovorax paradoxus (strain S110).